The sequence spans 395 residues: Phosphoglycerate kinase (395 aa).

Substrate-binding positions include 20–22 (DLN), Arg-35, 58–61 (HFGR), Arg-117, and Arg-150. ATP contacts are provided by residues Lys-200, Glu-322, and 352-355 (GGDT).

Belongs to the phosphoglycerate kinase family. As to quaternary structure, monomer.

The protein localises to the cytoplasm. It carries out the reaction (2R)-3-phosphoglycerate + ATP = (2R)-3-phospho-glyceroyl phosphate + ADP. Its pathway is carbohydrate degradation; glycolysis; pyruvate from D-glyceraldehyde 3-phosphate: step 2/5. The chain is Phosphoglycerate kinase from Brucella suis biovar 1 (strain 1330).